A 384-amino-acid polypeptide reads, in one-letter code: NADH-quinone oxidoreductase subunit D 2 (384 aa).

The protein belongs to the complex I 49 kDa subunit family. As to quaternary structure, NDH-1 is composed of 14 different subunits. Subunits NuoB, C, D, E, F, and G constitute the peripheral sector of the complex.

It is found in the cell membrane. It carries out the reaction a quinone + NADH + 5 H(+)(in) = a quinol + NAD(+) + 4 H(+)(out). In terms of biological role, NDH-1 shuttles electrons from NADH, via FMN and iron-sulfur (Fe-S) centers, to quinones in the respiratory chain. The immediate electron acceptor for the enzyme in this species is believed to be a menaquinone. Couples the redox reaction to proton translocation (for every two electrons transferred, four hydrogen ions are translocated across the cytoplasmic membrane), and thus conserves the redox energy in a proton gradient. This Symbiobacterium thermophilum (strain DSM 24528 / JCM 14929 / IAM 14863 / T) protein is NADH-quinone oxidoreductase subunit D 2.